A 251-amino-acid chain; its full sequence is MAARYDRAITVFSPDGHLFQVEYAQEAVKKGSTAVGIRGKDIVVLGVEKKSVAKLQEERTVRKICALDEHVCMAFAGLTADARIVINRARVECQSHRLTVEDPVTVEYITRYIATLKQRYTQSNGRRPFGISALIVGFDFDGTPRLYQTDPSGTYHAWKANAIGRSAKTVREFLEKNYTDEAIASDNDAIKLAIKALLEVVQSGGKNIELAVIRRNQPLKILESKEIETLVAEIEKEKEEEAEKKKQKKSS.

It belongs to the peptidase T1A family. The 26S proteasome consists of a 20S proteasome core and two 19S regulatory subunits. The 20S proteasome core is composed of 28 subunits that are arranged in four stacked rings, resulting in a barrel-shaped structure. The two end rings are each formed by seven alpha subunits, and the two central rings are each formed by seven beta subunits. The catalytic chamber with the active sites is on the inside of the barrel.

The protein resides in the cytoplasm. It is found in the nucleus. Its function is as follows. The proteasome is a multicatalytic proteinase complex which is characterized by its ability to cleave peptides with Arg, Phe, Tyr, Leu, and Glu adjacent to the leaving group at neutral or slightly basic pH. The proteasome has an ATP-dependent proteolytic activity. The sequence is that of Proteasome subunit alpha type-7 (psma7) from Carassius auratus (Goldfish).